The sequence spans 144 residues: Large ribosomal subunit protein uL15 (144 aa).

Positions 1 to 51 (MRLNTLSPAEGAKHSAKRLGRGIGSGLGKTGGRGHKGQKSRTGGKVRRGFE) are disordered. The segment covering 21–31 (RGIGSGLGKTG) has biased composition (gly residues). Residues 32–47 (GRGHKGQKSRTGGKVR) are compositionally biased toward basic residues.

Belongs to the universal ribosomal protein uL15 family. As to quaternary structure, part of the 50S ribosomal subunit.

Its function is as follows. Binds to the 23S rRNA. The chain is Large ribosomal subunit protein uL15 from Actinobacillus succinogenes (strain ATCC 55618 / DSM 22257 / CCUG 43843 / 130Z).